The primary structure comprises 219 residues: Protein OPG170 (219 aa).

Positions 1–16 (MYSLLFIILMCIPFSF) are cleaved as a signal peptide. N-linked (GlcNAc...) asparagine; by host glycosylation occurs at Asn-70.

Belongs to the orthopoxvirus OPG170 family.

Its subcellular location is the secreted. In terms of biological role, may interact with several cellular chemokines to interfere with chemokine-glycosaminoglycan (GAG) interactions at the cell surface to alter chemotaxis of nearby responsive cells. The protein is Protein OPG170 (OPG170) of Vaccinia virus (strain Copenhagen) (VACV).